Consider the following 63-residue polypeptide: Cytochrome c oxidase subunit 7C, mitochondrial (63 aa).

A mitochondrion-targeting transit peptide spans 1 to 16; sequence MLGQSIRRFTTSVVRR. At 17–33 the chain is on the mitochondrial matrix side; that stretch reads SHYEEGPGKNLPFSVEN. Lys25 carries the post-translational modification N6-acetyllysine; alternate. Lys25 bears the N6-succinyllysine; alternate mark. The helical transmembrane segment at 34-60 threads the bilayer; the sequence is KWSLLAKMCLYFGSAFATPFLIVRHQL. The Mitochondrial intermembrane segment spans residues 61-63; the sequence is LKT.

The protein belongs to the cytochrome c oxidase VIIc family. In terms of assembly, component of the cytochrome c oxidase (complex IV, CIV), a multisubunit enzyme composed of 14 subunits. The complex is composed of a catalytic core of 3 subunits MT-CO1, MT-CO2 and MT-CO3, encoded in the mitochondrial DNA, and 11 supernumerary subunits COX4I, COX5A, COX5B, COX6A, COX6B, COX6C, COX7A, COX7B, COX7C, COX8 and NDUFA4, which are encoded in the nuclear genome. The complex exists as a monomer or a dimer and forms supercomplexes (SCs) in the inner mitochondrial membrane with NADH-ubiquinone oxidoreductase (complex I, CI) and ubiquinol-cytochrome c oxidoreductase (cytochrome b-c1 complex, complex III, CIII), resulting in different assemblies (supercomplex SCI(1)III(2)IV(1) and megacomplex MCI(2)III(2)IV(2)). Interacts with RAB5IF.

The protein resides in the mitochondrion inner membrane. It participates in energy metabolism; oxidative phosphorylation. Functionally, component of the cytochrome c oxidase, the last enzyme in the mitochondrial electron transport chain which drives oxidative phosphorylation. The respiratory chain contains 3 multisubunit complexes succinate dehydrogenase (complex II, CII), ubiquinol-cytochrome c oxidoreductase (cytochrome b-c1 complex, complex III, CIII) and cytochrome c oxidase (complex IV, CIV), that cooperate to transfer electrons derived from NADH and succinate to molecular oxygen, creating an electrochemical gradient over the inner membrane that drives transmembrane transport and the ATP synthase. Cytochrome c oxidase is the component of the respiratory chain that catalyzes the reduction of oxygen to water. Electrons originating from reduced cytochrome c in the intermembrane space (IMS) are transferred via the dinuclear copper A center (CU(A)) of subunit 2 and heme A of subunit 1 to the active site in subunit 1, a binuclear center (BNC) formed by heme A3 and copper B (CU(B)). The BNC reduces molecular oxygen to 2 water molecules using 4 electrons from cytochrome c in the IMS and 4 protons from the mitochondrial matrix. The polypeptide is Cytochrome c oxidase subunit 7C, mitochondrial (COX7C) (Pongo pygmaeus (Bornean orangutan)).